The primary structure comprises 163 residues: ATP synthase subunit b 2 (163 aa).

The helical transmembrane segment at 5–25 (SLATLWATIALIIFLGVAIYI) threads the bilayer.

It belongs to the ATPase B chain family. As to quaternary structure, F-type ATPases have 2 components, F(1) - the catalytic core - and F(0) - the membrane proton channel. F(1) has five subunits: alpha(3), beta(3), gamma(1), delta(1), epsilon(1). F(0) has three main subunits: a(1), b(2) and c(10-14). The alpha and beta chains form an alternating ring which encloses part of the gamma chain. F(1) is attached to F(0) by a central stalk formed by the gamma and epsilon chains, while a peripheral stalk is formed by the delta and b chains.

Its subcellular location is the cell inner membrane. In terms of biological role, f(1)F(0) ATP synthase produces ATP from ADP in the presence of a proton or sodium gradient. F-type ATPases consist of two structural domains, F(1) containing the extramembraneous catalytic core and F(0) containing the membrane proton channel, linked together by a central stalk and a peripheral stalk. During catalysis, ATP synthesis in the catalytic domain of F(1) is coupled via a rotary mechanism of the central stalk subunits to proton translocation. Its function is as follows. Component of the F(0) channel, it forms part of the peripheral stalk, linking F(1) to F(0). The protein is ATP synthase subunit b 2 of Mesorhizobium japonicum (strain LMG 29417 / CECT 9101 / MAFF 303099) (Mesorhizobium loti (strain MAFF 303099)).